Reading from the N-terminus, the 410-residue chain is Dipeptidase 1 (410 aa).

The signal sequence occupies residues 1-16 (MVIIWWFWSLLAICAS). His36 and Asp38 together coordinate Zn(2+). Residues Cys87 and Cys170 are joined by a disulfide bond. N-linked (GlcNAc...) asparagine glycosylation is present at Asn121. Glu141 is a Zn(2+) binding site. Residue His168 participates in substrate binding. Zn(2+) contacts are provided by His214 and His235. Cys242 and Cys274 are disulfide-bonded. Arg246 provides a ligand contact to substrate. N-linked (GlcNAc...) asparagine glycosylation occurs at Asn258. Asp304 is a binding site for substrate. Asn332 is a glycosylation site (N-linked (GlcNAc...) asparagine). Ser384 is lipidated: GPI-anchor amidated serine. A propeptide spans 385–410 (QAHSIHLQTGALVASLASLLFRLHLL) (removed in mature form).

This sequence belongs to the metallo-dependent hydrolases superfamily. Peptidase M19 family. Homodimer; disulfide-linked. The cofactor is Zn(2+). In terms of tissue distribution, expressed in heart, lung, skeletal muscle, kidney, liver, and testis. Not detected in brain and spleen.

The protein resides in the apical cell membrane. The protein localises to the cell projection. Its subcellular location is the microvillus membrane. It carries out the reaction an L-aminoacyl-L-amino acid + H2O = 2 an L-alpha-amino acid. It catalyses the reaction leukotriene D4 + H2O = leukotriene E4 + glycine. The enzyme catalyses L-cystine-bis-glycine + 2 H2O = L-cystine + 2 glycine. The catalysed reaction is a beta-lactam + H2O = a substituted beta-amino acid. It carries out the reaction glycyldehydrophenylalanine + H2O = 2,3-didehydrophenylalanine + glycine. With respect to regulation, inhibited by L-penicillamine. Inhibited by cilastatin. Functionally, hydrolyzes a wide range of dipeptides including the conversion of leukotriene D4 to leukotriene E4. Hydrolyzes cystinyl-bis-glycine (cys-bis-gly) formed during glutathione degradation. Also possesses beta lactamase activity and hydrolytically inactivates beta-lactam antibiotics. In terms of biological role, independently of its dipeptidase activity, acts as an adhesion receptor for neutrophil recruitment from bloodstream into inflamed lungs and liver. In Mus musculus (Mouse), this protein is Dipeptidase 1 (Dpep1).